Reading from the N-terminus, the 310-residue chain is Ribose-phosphate pyrophosphokinase (310 aa).

ATP-binding positions include 34–36 and 93–94; these read DQE and RQ. Histidine 127 and aspartate 167 together coordinate Mg(2+). Lysine 190 is a catalytic residue. D-ribose 5-phosphate-binding positions include arginine 192, aspartate 216, and 220-224; that span reads DSGGT.

This sequence belongs to the ribose-phosphate pyrophosphokinase family. Class I subfamily. Homohexamer. Mg(2+) serves as cofactor.

It is found in the cytoplasm. The enzyme catalyses D-ribose 5-phosphate + ATP = 5-phospho-alpha-D-ribose 1-diphosphate + AMP + H(+). It participates in metabolic intermediate biosynthesis; 5-phospho-alpha-D-ribose 1-diphosphate biosynthesis; 5-phospho-alpha-D-ribose 1-diphosphate from D-ribose 5-phosphate (route I): step 1/1. Functionally, involved in the biosynthesis of the central metabolite phospho-alpha-D-ribosyl-1-pyrophosphate (PRPP) via the transfer of pyrophosphoryl group from ATP to 1-hydroxyl of ribose-5-phosphate (Rib-5-P). This chain is Ribose-phosphate pyrophosphokinase, found in Rhizobium meliloti (strain 1021) (Ensifer meliloti).